We begin with the raw amino-acid sequence, 242 residues long: NAD-dependent protein deacetylase (242 aa).

One can recognise a Deacetylase sirtuin-type domain in the interval 1 to 242; the sequence is MQQFEEVRTI…EFVEGLSSIK (242 aa). NAD(+) contacts are provided by Ala-23, Thr-27, Phe-34, Arg-35, Gln-102, Ile-104, Asp-105, and His-120. Phe-34 serves as a coordination point for nicotinamide. Nicotinamide is bound by residues Ile-104 and Asp-105. Catalysis depends on His-120, which acts as the Proton acceptor. The Zn(2+) site is built by Cys-128, Cys-131, Cys-148, and Cys-151. NAD(+)-binding residues include Thr-187, Ser-188, Asn-213, and Ile-231.

It belongs to the sirtuin family. Class U subfamily. Zn(2+) is required as a cofactor.

Its subcellular location is the cytoplasm. The catalysed reaction is N(6)-acetyl-L-lysyl-[protein] + NAD(+) + H2O = 2''-O-acetyl-ADP-D-ribose + nicotinamide + L-lysyl-[protein]. In terms of biological role, NAD-dependent protein deacetylase which modulates the activities of several enzymes which are inactive in their acetylated form. The polypeptide is NAD-dependent protein deacetylase (Bacillus anthracis).